The chain runs to 286 residues: D-tagatose-1,6-bisphosphate aldolase subunit KbaY (286 aa).

The active-site Proton donor is Asp82. Positions 83 and 180 each coordinate Zn(2+). Residue Gly181 coordinates dihydroxyacetone phosphate. His208 serves as a coordination point for Zn(2+). Residues 209-211 (GAS) and 230-233 (NVAT) each bind dihydroxyacetone phosphate.

This sequence belongs to the class II fructose-bisphosphate aldolase family. TagBP aldolase KbaY subfamily. In terms of assembly, homotetramer. Forms a complex with KbaZ. Requires Zn(2+) as cofactor.

It catalyses the reaction D-tagatofuranose 1,6-bisphosphate = D-glyceraldehyde 3-phosphate + dihydroxyacetone phosphate. It participates in carbohydrate metabolism; D-tagatose 6-phosphate degradation; D-glyceraldehyde 3-phosphate and glycerone phosphate from D-tagatose 6-phosphate: step 2/2. Functionally, catalytic subunit of the tagatose-1,6-bisphosphate aldolase KbaYZ, which catalyzes the reversible aldol condensation of dihydroxyacetone phosphate (DHAP or glycerone-phosphate) with glyceraldehyde 3-phosphate (G3P) to produce tagatose 1,6-bisphosphate (TBP). Requires KbaZ subunit for full activity and stability. In Escherichia coli O17:K52:H18 (strain UMN026 / ExPEC), this protein is D-tagatose-1,6-bisphosphate aldolase subunit KbaY.